The following is a 119-amino-acid chain: Large ribosomal subunit protein bL20 (119 aa).

It belongs to the bacterial ribosomal protein bL20 family.

Functionally, binds directly to 23S ribosomal RNA and is necessary for the in vitro assembly process of the 50S ribosomal subunit. It is not involved in the protein synthesizing functions of that subunit. The polypeptide is Large ribosomal subunit protein bL20 (Herminiimonas arsenicoxydans).